Consider the following 537-residue polypeptide: Bifunctional purine biosynthesis protein PurH (537 aa).

Residues 11 to 158 (ADIQRVRRAL…KNHAYVGVIV (148 aa)) form the MGS-like domain.

This sequence belongs to the PurH family.

It carries out the reaction (6R)-10-formyltetrahydrofolate + 5-amino-1-(5-phospho-beta-D-ribosyl)imidazole-4-carboxamide = 5-formamido-1-(5-phospho-D-ribosyl)imidazole-4-carboxamide + (6S)-5,6,7,8-tetrahydrofolate. It catalyses the reaction IMP + H2O = 5-formamido-1-(5-phospho-D-ribosyl)imidazole-4-carboxamide. It participates in purine metabolism; IMP biosynthesis via de novo pathway; 5-formamido-1-(5-phospho-D-ribosyl)imidazole-4-carboxamide from 5-amino-1-(5-phospho-D-ribosyl)imidazole-4-carboxamide (10-formyl THF route): step 1/1. The protein operates within purine metabolism; IMP biosynthesis via de novo pathway; IMP from 5-formamido-1-(5-phospho-D-ribosyl)imidazole-4-carboxamide: step 1/1. The protein is Bifunctional purine biosynthesis protein PurH of Parvibaculum lavamentivorans (strain DS-1 / DSM 13023 / NCIMB 13966).